We begin with the raw amino-acid sequence, 470 residues long: ATP synthase subunit beta (470 aa).

156–163 (GGAGVGKT) serves as a coordination point for ATP.

It belongs to the ATPase alpha/beta chains family. As to quaternary structure, F-type ATPases have 2 components, CF(1) - the catalytic core - and CF(0) - the membrane proton channel. CF(1) has five subunits: alpha(3), beta(3), gamma(1), delta(1), epsilon(1). CF(0) has three main subunits: a(1), b(2) and c(9-12). The alpha and beta chains form an alternating ring which encloses part of the gamma chain. CF(1) is attached to CF(0) by a central stalk formed by the gamma and epsilon chains, while a peripheral stalk is formed by the delta and b chains.

Its subcellular location is the cell inner membrane. The enzyme catalyses ATP + H2O + 4 H(+)(in) = ADP + phosphate + 5 H(+)(out). Functionally, produces ATP from ADP in the presence of a proton gradient across the membrane. The catalytic sites are hosted primarily by the beta subunits. The chain is ATP synthase subunit beta from Nitratidesulfovibrio vulgaris (strain ATCC 29579 / DSM 644 / CCUG 34227 / NCIMB 8303 / VKM B-1760 / Hildenborough) (Desulfovibrio vulgaris).